A 301-amino-acid chain; its full sequence is Cytosolic sulfotransferase 3 (301 aa).

53–58 is a 3'-phosphoadenylyl sulfate binding site; sequence KAGTTW. Catalysis depends on His-115, which acts as the Proton acceptor. Residues Arg-137, Ser-145, Tyr-201, 235–240, and 263–265 contribute to the 3'-phosphoadenylyl sulfate site; these read VQFDAM and RKG.

This sequence belongs to the sulfotransferase 1 family.

The protein resides in the cytoplasm. Its activity is regulated as follows. Inhibited by Hg(2+), Co(2+), Zn(2+), Cd(2+), Cu(2+) and Pb(2+) ions. Activated slightly by Mn(2+), Ca(2+) and Mg(2+) ions. Its function is as follows. Sulfotransferase that utilizes 3'-phospho-5'-adenylyl sulfate (PAPS) as sulfonate donor to catalyze the sulfate conjugation of a variety of xenobiotic and endogenous compounds, including dopamine, T3 (triiodo-L-thyronine), T4 (thyroxine), estrone, DHEA (dehydroepiandrosterone), flavonoids, isoflavonoids and other phenolic compounds. The protein is Cytosolic sulfotransferase 3 of Danio rerio (Zebrafish).